The following is a 385-amino-acid chain: 1-deoxy-D-xylulose 5-phosphate reductoisomerase (385 aa).

The NADPH site is built by Thr10, Gly11, Ser12, Ile13, Lys37, and Asn124. A 1-deoxy-D-xylulose 5-phosphate-binding site is contributed by Lys125. Residue Glu126 participates in NADPH binding. Asp150 contacts Mn(2+). The 1-deoxy-D-xylulose 5-phosphate site is built by Ser151, Glu152, Ser176, and His199. Glu152 provides a ligand contact to Mn(2+). An NADPH-binding site is contributed by Gly205. 4 residues coordinate 1-deoxy-D-xylulose 5-phosphate: Ser212, Asn217, Lys218, and Glu221. Glu221 contacts Mn(2+).

It belongs to the DXR family. It depends on Mg(2+) as a cofactor. Mn(2+) serves as cofactor.

The catalysed reaction is 2-C-methyl-D-erythritol 4-phosphate + NADP(+) = 1-deoxy-D-xylulose 5-phosphate + NADPH + H(+). It participates in isoprenoid biosynthesis; isopentenyl diphosphate biosynthesis via DXP pathway; isopentenyl diphosphate from 1-deoxy-D-xylulose 5-phosphate: step 1/6. Functionally, catalyzes the NADPH-dependent rearrangement and reduction of 1-deoxy-D-xylulose-5-phosphate (DXP) to 2-C-methyl-D-erythritol 4-phosphate (MEP). This Clostridium botulinum (strain Langeland / NCTC 10281 / Type F) protein is 1-deoxy-D-xylulose 5-phosphate reductoisomerase.